A 314-amino-acid polypeptide reads, in one-letter code: Methenyltetrahydromethanopterin cyclohydrolase (314 aa).

This sequence belongs to the MCH family.

It is found in the cytoplasm. The enzyme catalyses 5,10-methenyl-5,6,7,8-tetrahydromethanopterin + H2O = N(5)-formyl-5,6,7,8-tetrahydromethanopterin + H(+). It participates in one-carbon metabolism; methanogenesis from CO(2); 5,10-methenyl-5,6,7,8-tetrahydromethanopterin from CO(2): step 3/3. Functionally, catalyzes the reversible interconversion of 5-formyl-H(4)MPT to methenyl-H(4)MPT(+). In Methanocorpusculum labreanum (strain ATCC 43576 / DSM 4855 / Z), this protein is Methenyltetrahydromethanopterin cyclohydrolase.